Reading from the N-terminus, the 379-residue chain is Beta sliding clamp (379 aa).

The protein belongs to the beta sliding clamp family. Forms a ring-shaped head-to-tail homodimer around DNA which binds and tethers DNA polymerases and other proteins to the DNA. The DNA replisome complex has a single clamp-loading complex (3 tau and 1 each of delta, delta', psi and chi subunits) which binds 3 Pol III cores (1 core on the leading strand and 2 on the lagging strand) each with a beta sliding clamp dimer. Additional proteins in the replisome are other copies of gamma, psi and chi, Ssb, DNA helicase and RNA primase.

Its subcellular location is the cytoplasm. Functionally, confers DNA tethering and processivity to DNA polymerases and other proteins. Acts as a clamp, forming a ring around DNA (a reaction catalyzed by the clamp-loading complex) which diffuses in an ATP-independent manner freely and bidirectionally along dsDNA. Initially characterized for its ability to contact the catalytic subunit of DNA polymerase III (Pol III), a complex, multichain enzyme responsible for most of the replicative synthesis in bacteria; Pol III exhibits 3'-5' exonuclease proofreading activity. The beta chain is required for initiation of replication as well as for processivity of DNA replication. The chain is Beta sliding clamp (dnaN) from Rickettsia felis (strain ATCC VR-1525 / URRWXCal2) (Rickettsia azadi).